We begin with the raw amino-acid sequence, 572 residues long: Transcription factor E3 (572 aa).

A Phosphoserine; by MTOR modification is found at Ser47. Positions Thr87–Gln125 are enriched in low complexity. The interval Thr87–Ser152 is disordered. The segment covering Glu126–Gln135 has biased composition (basic and acidic residues). Arg187 carries the asymmetric dimethylarginine modification. Residues Leu210–Ala248 are disordered. The segment at Glu259 to Leu270 is strong transcription activation domain. The residue at position 320 (Ser320) is a Phosphoserine; by MTOR. A Glycyl lysine isopeptide (Lys-Gly) (interchain with G-Cter in SUMO2) cross-link involves residue Lys338. Residues Gln345–Leu398 enclose the bHLH domain. Positions Arg355–Arg358 match the Nuclear localization signal motif. The tract at residues Leu408 to Leu429 is leucine-zipper. Disordered regions lie at residues Pro439 to Ser495 and Val530 to Ser572. A compositionally biased stretch (low complexity) spans Leu446 to Ser457. Ser539, Ser545, Ser551, Ser553, Ser557, and Ser565 each carry phosphoserine. Low complexity predominate over residues Ala543 to Ser572.

It belongs to the MiT/TFE family. Homodimer and heterodimer; with TFEB or MITF. Interacts with RRAGC/RagC GDP-bound and RRAGD/RagD GDP-bound; promoting its recruitment to lysosomal membrane in the presence of nutrients. Interacts with TSC22D1; the interaction is enhanced in the presence of TGF-beta. Post-translationally, sumoylated; does not affect dimerization with MITF. In terms of processing, phosphorylation ar Ser-47 and Ser-320 by MTOR via non-canonical mTORC1 pathway regulates its stability and subcellular location, respectively. When nutrients are present, phosphorylation by MTOR at Ser-47 promotes ubiquitination by the SCF(BTRC) complex, followed by degradation. When nutrients are present, phosphorylation by MTOR at Ser-320 also promotes association with 14-3-3/YWHA adapters and retention in the cytosol. Phosphorylation at Ser-47 plays a more critical role than phosphorylation at Ser-320 for TFE3 inactivation. Inhibition of mTORC1, starvation and lysosomal disruption, promotes dephosphorylation and transcription factor activity. Ubiquitinated by the SCF(BTRC) and SCF(FBXW11) complexes following phosphorylation at Ser-47 by MTOR, leading to its degradation by the proteasome. In terms of tissue distribution, widely expressed.

It is found in the cytoplasm. The protein localises to the cytosol. It localises to the nucleus. The protein resides in the lysosome membrane. Its function is as follows. Transcription factor that acts as a master regulator of lysosomal biogenesis and immune response. Specifically recognizes and binds E-box sequences (5'-CANNTG-3'); efficient DNA-binding requires dimerization with itself or with another MiT/TFE family member such as TFEB or MITF. Involved in the cellular response to amino acid availability by acting downstream of MTOR: in the presence of nutrients, TFE3 phosphorylation by MTOR promotes its inactivation. Upon starvation or lysosomal stress, inhibition of MTOR induces TFE3 dephosphorylation, resulting in transcription factor activity. Specifically recognizes and binds the CLEAR-box sequence (5'-GTCACGTGAC-3') present in the regulatory region of many lysosomal genes, leading to activate their expression, thereby playing a central role in expression of lysosomal genes. Maintains the pluripotent state of embryonic stem cells by promoting the expression of genes such as ESRRB; mTOR-dependent TFE3 cytosolic retention and inactivation promotes exit from pluripotency. Required to maintain the naive pluripotent state of hematopoietic stem cell; mTOR-dependent cytoplasmic retention of TFE3 promotes the exit of hematopoietic stem cell from pluripotency. TFE3 activity is also involved in the inhibition of neuronal progenitor differentiation. Acts as a positive regulator of browning of adipose tissue by promoting expression of target genes; mTOR-dependent phosphorylation promotes cytoplasmic retention of TFE3 and inhibits browning of adipose tissue. In association with TFEB, activates the expression of CD40L in T-cells, thereby playing a role in T-cell-dependent antibody responses in activated CD4(+) T-cells and thymus-dependent humoral immunity. Specifically recognizes the MUE3 box, a subset of E-boxes, present in the immunoglobulin enhancer. It also binds very well to a USF/MLTF site. Promotes TGF-beta-induced transcription of COL1A2; via its interaction with TSC22D1 at E-boxes in the gene proximal promoter. May regulate lysosomal positioning in response to nutrient deprivation by promoting the expression of PIP4P1. The chain is Transcription factor E3 from Mus musculus (Mouse).